A 647-amino-acid chain; its full sequence is MAAKSDGRLKMKKSSDVAFTPLQNSDNSGSVQGLAPGLPSGSGAEDTEAAGGGCCPDGGGCSRCCCCCAGSGGSAGSGGSGGGGRGSGAGSAALCLRLGREQRRYSLWDCLWILAAVAVYFADVGTDIWLAVDYYLRGQRWWFGLTLFFVVLGSLSVQVFSFRWFVHDFSTEDSSTTTTSSCQQPGADCKTVVSSGSAAGEGEVRPSTPQRQASNASKSNIAATNSGSNSNGATRTSGKHRSASCSFCIWLLQSLIHILQLGQIWRYLHTIYLGIRSRQSGESGRWRFYWKMVYEYADVSMLHLLATFLESAPQLVLQLCIIVQTHSLQALQGFTAAASLVSLAWALASYQKALRDSRDDKKPISYMAVIIQFCWHFFTIAARVITFALFASVFQLYFGIFIVLHWCIMTFWIVHCETEFCITKWEEIVFDMVVGIIYIFSWFNVKEGRTRCRLFIYYFVILLENTALSALWYLYKAPQIADAFAIPALCVVFSSFLTGVVFMLMYYAFFHPNGPRFGQSPSCACDDPATAFSLPPEVATSTLRSISNNRSVASDRDQKFAERDGCVPVFQVRPTAPPTPSSRPPRIEESVIKIDLFRNRYPAWERHVLDRSLRKAILAFECSPSPPRLQYKDDALIQERLEYETTL.

Residues 1 to 15 are compositionally biased toward basic and acidic residues; the sequence is MAAKSDGRLKMKKSS. Residues 1–44 form a disordered region; that stretch reads MAAKSDGRLKMKKSSDVAFTPLQNSDNSGSVQGLAPGLPSGSGA. Residues 21 to 31 are compositionally biased toward polar residues; it reads PLQNSDNSGSV. 2 helical membrane-spanning segments follow: residues 112–132 and 142–162; these read WILA…WLAV and WFGL…VFSF. Position 197 is a phosphoserine (Ser-197). Residues 197–238 form a disordered region; that stretch reads SAAGEGEVRPSTPQRQASNASKSNIAATNSGSNSNGATRTSG. The segment covering 207–236 has biased composition (polar residues); it reads STPQRQASNASKSNIAATNSGSNSNGATRT. The next 8 helical transmembrane spans lie at 245–265, 303–323, 328–348, 362–382, 393–415, 425–445, 454–474, and 484–504; these read CSFC…GQIW, HLLA…CIIV, LQAL…WALA, KPIS…TIAA, VFQL…WIVH, WEEI…WFNV, LFIY…LWYL, and FAIP…VFML.

Belongs to the XK family. As to quaternary structure, homodimer; homodimerization takes place upon caspase cleavage. Interacts with the processed C-terminus of XRCC4 (protein XRCC4, C-terminus); interaction promotes the phospholipid scramblase activity. In terms of processing, undergoes proteolytic processing by caspase-3 (CASP3), caspase-6 (CASP6) and caspase-7 (CASP7) to generate the XK-related protein 4, processed form, leading to its activation. As to expression, highly expressed in expressed in the brain; weakly expressed in the spleen, thymus, uterus, blood vessels and fetus.

It localises to the cell membrane. It catalyses the reaction a 1,2-diacyl-sn-glycero-3-phospho-L-serine(in) = a 1,2-diacyl-sn-glycero-3-phospho-L-serine(out). Phospholipid scramblase activity is activated upon caspase cleavage to generate the XK-related protein 4, processed form. Does not act prior the onset of apoptosis. Its activity is regulated as follows. Homodimerizes upon caspase cleavage. Phospholipid scramblase activity is activated following interaction with the processed C-terminus of XRCC4 (protein XRCC4, C-terminus). Functionally, phospholipid scramblase that promotes phosphatidylserine exposure on apoptotic cell surface. Phosphatidylserine is a specific marker only present at the surface of apoptotic cells and acts as a specific signal for engulfment. The sequence is that of XK-related protein 4 from Mus musculus (Mouse).